Here is a 122-residue protein sequence, read N- to C-terminus: Putative cryptic phosphonate transport system permease protein PhnE2 (122 aa).

Positions 1-114 constitute an ABC transmembrane type-1 domain; it reads MLALFIHTTG…VTVSLLDFLS (114 aa). The next 4 membrane-spanning stretches (helical) occupy residues 3 to 23, 39 to 59, 68 to 88, and 93 to 113; these read ALFI…VEAI, LEEI…SYSL, SATV…WEAI, and FQQT…LDFL.

This sequence belongs to the binding-protein-dependent transport system permease family. As to quaternary structure, if the reading frame is restored, the complex is composed of two ATP-binding proteins (PhnC), two transmembrane proteins (PhnE) and a solute-binding protein (PhnD).

Its subcellular location is the cell inner membrane. Functionally, C-terminal fragment of the PhnE protein, part of a phosphonate usage operon that is cryptic in K12 strains. Growth of K12 strains on phosphonate can be observed when it is used as the sole phosphorus source after a 60 hour lag period, suggesting the operon is activated. An intact PhnE in strain B is (AC A0A140NFA3). Part of the binding-protein-dependent transport system for phosphonates; probably responsible for the translocation of the substrate across the membrane. The chain is Putative cryptic phosphonate transport system permease protein PhnE2 (phnE) from Escherichia coli (strain K12).